A 452-amino-acid chain; its full sequence is Chromosomal replication initiator protein DnaA (452 aa).

The segment at Met-1–Thr-73 is domain I, interacts with DnaA modulators. Residues Thr-73 to Gly-102 are domain II. Residues Asn-103–Ala-323 form a domain III, AAA+ region region. Residues Gly-147, Gly-149, Lys-150, and Thr-151 each contribute to the ATP site. The segment at Gln-324 to Lys-452 is domain IV, binds dsDNA.

Belongs to the DnaA family. As to quaternary structure, oligomerizes as a right-handed, spiral filament on DNA at oriC.

The protein localises to the cytoplasm. Its function is as follows. Plays an essential role in the initiation and regulation of chromosomal replication. ATP-DnaA binds to the origin of replication (oriC) to initiate formation of the DNA replication initiation complex once per cell cycle. Binds the DnaA box (a 9 base pair repeat at the origin) and separates the double-stranded (ds)DNA. Forms a right-handed helical filament on oriC DNA; dsDNA binds to the exterior of the filament while single-stranded (ss)DNA is stabiized in the filament's interior. The ATP-DnaA-oriC complex binds and stabilizes one strand of the AT-rich DNA unwinding element (DUE), permitting loading of DNA polymerase. After initiation quickly degrades to an ADP-DnaA complex that is not apt for DNA replication. Binds acidic phospholipids. This is Chromosomal replication initiator protein DnaA from Acholeplasma laidlawii (strain PG-8A).